Consider the following 209-residue polypeptide: Large ribosomal subunit protein bL25 (209 aa).

This sequence belongs to the bacterial ribosomal protein bL25 family. CTC subfamily. Part of the 50S ribosomal subunit; part of the 5S rRNA/L5/L18/L25 subcomplex. Contacts the 5S rRNA. Binds to the 5S rRNA independently of L5 and L18.

Its function is as follows. This is one of the proteins that binds to the 5S RNA in the ribosome where it forms part of the central protuberance. In Xanthomonas campestris pv. campestris (strain 8004), this protein is Large ribosomal subunit protein bL25.